Consider the following 284-residue polypeptide: Tryptophan 2,3-dioxygenase (284 aa).

Substrate-binding positions include 53–57 (FIVQH), Tyr-115, and Arg-119. His-242 provides a ligand contact to heme. Thr-256 lines the substrate pocket.

This sequence belongs to the tryptophan 2,3-dioxygenase family. In terms of assembly, homotetramer. The cofactor is heme.

The catalysed reaction is L-tryptophan + O2 = N-formyl-L-kynurenine. Its pathway is amino-acid degradation; L-tryptophan degradation via kynurenine pathway; L-kynurenine from L-tryptophan: step 1/2. In terms of biological role, heme-dependent dioxygenase that catalyzes the oxidative cleavage of the L-tryptophan (L-Trp) pyrrole ring and converts L-tryptophan to N-formyl-L-kynurenine. Catalyzes the oxidative cleavage of the indole moiety. The polypeptide is Tryptophan 2,3-dioxygenase (Bordetella parapertussis (strain 12822 / ATCC BAA-587 / NCTC 13253)).